We begin with the raw amino-acid sequence, 2128 residues long: Non-reducing polyketide synthase albA (2128 aa).

Positions 8–244 are N-terminal acylcarrier protein transacylase domain (SAT); sequence YLFGDQTSDI…VKAPIHGPYH (237 aa). Positions 375–806 constitute a Ketosynthase family 3 (KS3) domain; sequence NSKIAIIGMS…GGNTALLLED (432 aa). Residues Cys-547, His-682, and His-724 each act as for beta-ketoacyl synthase activity in the active site. Residues 912–1232 are malonyl-CoA:ACP transacylase (MAT) domain; that stretch reads FVFTGQGAQY…LASLHLAGID (321 aa). The active-site For acyl/malonyl transferase activity is Ser-1001. Residues 1286–1425 are N-terminal hotdog fold; it reads HEYLTTAAQK…CTVRFFDCAA (140 aa). In terms of domain architecture, PKS/mFAS DH spans 1286-1598; sequence HEYLTTAAQK…FQALSRKILD (313 aa). The product template (PT) domain stretch occupies residues 1290-1603; sequence TTAAQKVIET…RKILDTVLPP (314 aa). The active-site Proton acceptor; for dehydratase activity is the His-1326. A C-terminal hotdog fold region spans residues 1452 to 1598; that stretch reads DAHRLGRGMV…FQALSRKILD (147 aa). The active-site Proton donor; for dehydratase activity is Asp-1511. The Carrier 1 domain maps to 1618–1695; the sequence is PSAPSLVKRA…DFKQFLAPMS (78 aa). O-(pantetheine 4'-phosphoryl)serine is present on Ser-1655. Positions 1695–1740 are disordered; sequence SQGEASDGSTSDPESSSSFNGGSSTDESSAGSPVSSPPNEKVTQVE. Residues 1700–1723 are compositionally biased toward low complexity; sequence SDGSTSDPESSSSFNGGSSTDESS. A compositionally biased stretch (polar residues) spans 1724–1740; sequence AGSPVSSPPNEKVTQVE. A Carrier 2 domain is found at 1739–1816; that stretch reads VEQHATIKEI…DVEDALGLKP (78 aa). The residue at position 1776 (Ser-1776) is an O-(pantetheine 4'-phosphoryl)serine. Residues 1854–2126 form a claisen cyclase domain region; the sequence is SPHPRSTSIL…ELGSFIGNAM (273 aa). Ser-1944 acts as the For Claisen cyclase activity in catalysis.

The catalysed reaction is 6 malonyl-CoA + acetyl-CoA + 6 H(+) = naphtopyrone YWA1 + 6 CO2 + 7 CoA + H2O. It participates in secondary metabolite biosynthesis. In terms of biological role, non-reducing polyketide synthase; part of the gene cluster that mediates the biosynthesis of aurasperone B, a dimeric gamma-naphthopyrone. The first step in the biosynthesis of aurasperone B is the production of gamma-naphthopyrone precursor YWA1 by the non-reducing polyketide synthase albA, via condensation of one acetyl-CoA starter unit with 6 malonyl-CoA units. YWA1 is then methylated by aunE at position C-6 to yield foncesin which is further methylated at position C-8 by aunD to produce fonsecin B. A key enzyme in the biosynthetic pathway is the cytochrome P450 monooxygenase aunB which catalyzes the oxidative dimerization of fonsecin B to aurasperone B. AunB also catalyzes the oxidative dimerization of rubrofusarin B into aurasperone A. This chain is Non-reducing polyketide synthase albA, found in Aspergillus niger (strain ATCC 1015 / CBS 113.46 / FGSC A1144 / LSHB Ac4 / NCTC 3858a / NRRL 328 / USDA 3528.7).